Here is a 539-residue protein sequence, read N- to C-terminus: Chaperonin GroEL (539 aa).

Residues 29-32 (TLGP), 86-90 (DGTTT), Gly413, 477-479 (NAA), and Asp493 contribute to the ATP site.

This sequence belongs to the chaperonin (HSP60) family. Forms a cylinder of 14 subunits composed of two heptameric rings stacked back-to-back. Interacts with the co-chaperonin GroES.

The protein resides in the cytoplasm. The enzyme catalyses ATP + H2O + a folded polypeptide = ADP + phosphate + an unfolded polypeptide.. Its function is as follows. Together with its co-chaperonin GroES, plays an essential role in assisting protein folding. The GroEL-GroES system forms a nano-cage that allows encapsulation of the non-native substrate proteins and provides a physical environment optimized to promote and accelerate protein folding. In Leifsonia xyli subsp. xyli (strain CTCB07), this protein is Chaperonin GroEL.